An 87-amino-acid chain; its full sequence is Small ribosomal subunit protein bS20 (87 aa).

It belongs to the bacterial ribosomal protein bS20 family.

In terms of biological role, binds directly to 16S ribosomal RNA. The chain is Small ribosomal subunit protein bS20 from Beijerinckia indica subsp. indica (strain ATCC 9039 / DSM 1715 / NCIMB 8712).